The chain runs to 248 residues: Probable transcriptional regulatory protein LAR_0538 (248 aa).

A disordered region spans residues 1 to 22 (MSGHSKWHNIQGRKNAQDAKRG).

It belongs to the TACO1 family.

It localises to the cytoplasm. This Limosilactobacillus reuteri subsp. reuteri (strain JCM 1112) (Lactobacillus reuteri) protein is Probable transcriptional regulatory protein LAR_0538.